The sequence spans 433 residues: Tol-Pal system protein TolB (433 aa).

The first 26 residues, 1–26 (MSLMTKLGFRALVASCLIAAGGAAHA), serve as a signal peptide directing secretion.

This sequence belongs to the TolB family. The Tol-Pal system is composed of five core proteins: the inner membrane proteins TolA, TolQ and TolR, the periplasmic protein TolB and the outer membrane protein Pal. They form a network linking the inner and outer membranes and the peptidoglycan layer.

It localises to the periplasm. Part of the Tol-Pal system, which plays a role in outer membrane invagination during cell division and is important for maintaining outer membrane integrity. The chain is Tol-Pal system protein TolB from Burkholderia thailandensis (strain ATCC 700388 / DSM 13276 / CCUG 48851 / CIP 106301 / E264).